A 600-amino-acid polypeptide reads, in one-letter code: Elongation factor 4 (600 aa).

The 183-residue stretch at 5–187 (KYIRNFSIIA…AIVNKLPPPK (183 aa)) folds into the tr-type G domain. Residues 17–22 (DHGKST) and 134–137 (NKID) each bind GTP.

This sequence belongs to the TRAFAC class translation factor GTPase superfamily. Classic translation factor GTPase family. LepA subfamily.

It localises to the cell inner membrane. The enzyme catalyses GTP + H2O = GDP + phosphate + H(+). Its function is as follows. Required for accurate and efficient protein synthesis under certain stress conditions. May act as a fidelity factor of the translation reaction, by catalyzing a one-codon backward translocation of tRNAs on improperly translocated ribosomes. Back-translocation proceeds from a post-translocation (POST) complex to a pre-translocation (PRE) complex, thus giving elongation factor G a second chance to translocate the tRNAs correctly. Binds to ribosomes in a GTP-dependent manner. In Rickettsia canadensis (strain McKiel), this protein is Elongation factor 4.